The following is a 440-amino-acid chain: Ferreportin (440 aa).

Topologically, residues 1 to 8 (MKVQSLLR) are cytoplasmic. A helical transmembrane segment spans residues 9 to 38 (IETQLLLGRLLTRSGDQAWDFVVPFALLVI). A Ca(2+)-binding site is contributed by aspartate 24. The Extracellular portion of the chain corresponds to 39–42 (FPGK). The chain crosses the membrane as a helical span at residues 43-69 (LQVAAFYYLIVKIGTFLLTPSSGKWID). The Cytoplasmic segment spans residues 70–72 (THP). A helical membrane pass occupies residues 73-103 (RIQVVKWGVWLQFFAILAGMVFFGMLDGLVR). Glutamine 84 is a binding site for Ca(2+). Residues 104-109 (AGGRES) are Extracellular-facing. The chain crosses the membrane as a helical span at residues 110 to 145 (WLLSVLFIALALSGVMASLGSQITDISVGNDLAPSL). At 146-147 (VA) the chain is on the cytoplasmic side. The helical transmembrane segment at 148–176 (PEKLTHFNSWLRRIDLATEVGAPILAGAL) threads the bilayer. Residues 177–186 (FAFHPEQLPL) are Extracellular-facing. The chain crosses the membrane as a helical span at residues 187 to 213 (AGLFLIGLWNLVSFVPEYFLLRNVIQR). Ca(2+) is bound by residues asparagine 196 and glutamate 203. Over 214–242 (SGLKIKVLTEAQSWKDTFHINLRGSFSDP) the chain is Cytoplasmic. The chain crosses the membrane as a helical span at residues 243 to 271 (IFWLILSYALLWLSVLSPHGVLLAAYLKD). The Extracellular segment spans residues 272 to 276 (EMRLP). The chain crosses the membrane as a helical span at residues 277 to 304 (ETEIGLFRGLGAVFGLISTVSFPYLVRR). Topologically, residues 305–306 (LG) are cytoplasmic. A helical membrane pass occupies residues 307-329 (LISSSRWHLGFQGVTLGIAVTAF). The Extracellular portion of the chain corresponds to 330–335 (AMGSTA). A helical membrane pass occupies residues 336–365 (SVYVFLGCILLSRVGLYGFSNGEFELRQRL). At 366–370 (IPEGR) the chain is on the cytoplasmic side. Residues 371–395 (RGELNSLSSLTTTSATLILFSAGSL) form a helical membrane-spanning segment. The Extracellular segment spans residues 396–398 (LPQ). A helical transmembrane segment spans residues 399–424 (TEDFKYLVYVSLAAVLLANVVFIKWS). Topologically, residues 425-440 (SRQGVVTSGAAEPVES) are cytoplasmic.

It belongs to the ferroportin (FP) (TC 2.A.100) family. Requires Ca(2+) as cofactor.

The protein resides in the cell membrane. Its function is as follows. Iron transpoter that exports Fe(2+) from the cell. Also binds to Co(2+) and Ni(2+). May act as a multivalent divalent metal transporter. The transporter is composed of 12 transmembrane (TM) helices organized into N-terminal (TM1-6) and C-terminal (TM7-12) domains. The substrate-binding site is formed at the interface of the two domains and is alternately accessible from either side of the membrane. The transport cycle is viewed as a series of ligand-induced conformational changes that include open outward and open inward states. The sequence is that of Ferreportin (slc39) from Bdellovibrio bacteriovorus (strain ATCC 15356 / DSM 50701 / NCIMB 9529 / HD100).